The primary structure comprises 4456 residues: Dynein axonemal heavy chain 2 (4456 aa).

Basic residues predominate over residues 1-12 (MASKAEKKRKVA). The tract at residues 1-55 (MASKAEKKRKVAGRGGARAGRVVRAPQSTAGPGATEASLLPDGQEPEPESGKEDS) is disordered. The stem stretch occupies residues 1–1795 (MASKAEKKRK…RQTNTQFQYG (1795 aa)). A coiled-coil region spans residues 1218-1274 (LDQIAQMRAMLMAMRDEENNLRSNLGIFKIEQPVSKDLQILEKELDALQQVWEITRD). A TPR 1 repeat occupies 1439–1474 (EDNQVALSTMKASRFVKAFEKDVDHWERCLSLILEV). 4 AAA regions span residues 1794 to 2015 (YGYE…LLRY), 2075 to 2302 (DTIE…DNCN), 2407 to 2654 (RYPP…VFQG), and 2751 to 3003 (EYNL…LRRY). Residues 1832–1839 (GPAGTGKT), 2113–2120 (GGTGSSKT), and 2445–2452 (GPVGTGKT) contribute to the ATP site. The stretch at 2750-2783 (NEYNLSPSVVPMQLVLFREAIEHITRIVRVIGQP) is one TPR 2 repeat. 2791-2798 (GIGGSGRQ) is an ATP binding site. The stalk stretch occupies residues 3018 to 3301 (YKKLLGEKRQ…EELRKKSEEM (284 aa)). Positions 3041–3078 (FKIDETREKVEVMSLELEDAKKKVAEFQKQCEEYLVII) form a coiled coil. The stretch at 3101 to 3134 (IEEVKCQALADNAQKDLEEALPALEEAMRALESL) is one TPR 3 repeat. 2 coiled-coil regions span residues 3245–3333 (KRIR…EEDL) and 3552–3596 (VRKE…GSLL). 2 AAA regions span residues 3387–3617 (LTNP…EVTE) and 3833–4052 (VTSF…LLSL). TPR repeat units lie at residues 4101–4134 (TTPF…LPSM) and 4135–4169 (DPPE…QPQI).

The protein belongs to the dynein heavy chain family. As to quaternary structure, part of the axonemal inner dynein arm complex that consists of at least two heavy chains and a number of intermediate and light chains. Interacts with DNAI4.

It is found in the cytoplasm. It localises to the cytoskeleton. Its subcellular location is the cilium axoneme. The protein resides in the flagellum axoneme. Functionally, as part of the axonemal inner dynein arm complex plays a central role in ciliary beat. Expressed in sperm flagellum, it is required for sperm motility. Dyneins are microtubule-based molecular motors possessing ATPase activities that can convert the chemical energy of ATP into relative sliding between adjacent microtubule doublets to generate ciliary bending. In Mus musculus (Mouse), this protein is Dynein axonemal heavy chain 2.